We begin with the raw amino-acid sequence, 50 residues long: Large ribosomal subunit protein bL33A (50 aa).

The protein belongs to the bacterial ribosomal protein bL33 family.

This chain is Large ribosomal subunit protein bL33A (rpmG1), found in Mycoplasmopsis pulmonis (strain UAB CTIP) (Mycoplasma pulmonis).